Here is a 141-residue protein sequence, read N- to C-terminus: Translation initiation factor IF-1, chloroplastic (141 aa).

A chloroplast-targeting transit peptide spans 1–46 (MLQLCSTFRPQLLLPCQFRFTNGVLIPQINYVASNSVVNIRPMIRC). Residues 49–69 (ASGGRGGANRSKPAKPQVKEG) are disordered. Residues 63–138 (KPQVKEGSNK…TKGRIIFRMS (76 aa)) enclose the S1-like domain.

This sequence belongs to the IF-1 family. Component of the 30S ribosomal translation pre-initiation complex which assembles on the 30S ribosome in the order IF-2 and IF-3, IF-1 and N-formylmethionyl-tRNA(fMet); mRNA recruitment can occur at any time during PIC assembly.

It is found in the plastid. The protein localises to the chloroplast. One of the essential components for the initiation of protein synthesis. Stabilizes the binding of IF-2 and IF-3 on the 30S subunit to which N-formylmethionyl-tRNA(fMet) subsequently binds. Helps modulate mRNA selection, yielding the 30S pre-initiation complex (PIC). Upon addition of the 50S ribosomal subunit IF-1, IF-2 and IF-3 are released leaving the mature 70S translation initiation complex. The chain is Translation initiation factor IF-1, chloroplastic from Arabidopsis thaliana (Mouse-ear cress).